We begin with the raw amino-acid sequence, 148 residues long: Large-conductance mechanosensitive channel (148 aa).

2 helical membrane passes run 16–36 and 89–109; these read VMDL…VNSI and GSFI…FLMV.

It belongs to the MscL family. As to quaternary structure, homopentamer.

Its subcellular location is the cell inner membrane. Channel that opens in response to stretch forces in the membrane lipid bilayer. May participate in the regulation of osmotic pressure changes within the cell. This Paraburkholderia phytofirmans (strain DSM 17436 / LMG 22146 / PsJN) (Burkholderia phytofirmans) protein is Large-conductance mechanosensitive channel.